We begin with the raw amino-acid sequence, 164 residues long: Putative anionic 4-hydroxy-benzoate permease (164 aa).

The tract at residues 1–30 (CGRRRGSLAWPDASSPSANPRPGAGAAESS) is disordered. 3 consecutive transmembrane segments (helical) span residues 62–82 (LWVA…LMFM), 97–117 (GMAQ…VGGL), and 126–146 (PALT…MLAG).

It belongs to the major facilitator superfamily. Cyanate porter (TC 2.A.1.17) family.

The protein localises to the cell membrane. Its function is as follows. May be involved in uptake of anionic 4-hydroxy-benzoate. This is Putative anionic 4-hydroxy-benzoate permease from Thauera aromatica.